The sequence spans 1083 residues: Error-prone DNA polymerase (1083 aa).

The protein belongs to the DNA polymerase type-C family. DnaE2 subfamily.

The protein localises to the cytoplasm. The enzyme catalyses DNA(n) + a 2'-deoxyribonucleoside 5'-triphosphate = DNA(n+1) + diphosphate. DNA polymerase involved in damage-induced mutagenesis and translesion synthesis (TLS). It is not the major replicative DNA polymerase. The chain is Error-prone DNA polymerase from Xanthomonas axonopodis pv. citri (strain 306).